Consider the following 248-residue polypeptide: 4-hydroxy-tetrahydrodipicolinate reductase (248 aa).

Residues 9-14, 77-79, and 104-107 each bind NAD(+); these read GAKGRV, GTT, and APNF. His134 functions as the Proton donor/acceptor in the catalytic mechanism. Position 135 (His135) interacts with (S)-2,3,4,5-tetrahydrodipicolinate. Catalysis depends on Lys138, which acts as the Proton donor. (S)-2,3,4,5-tetrahydrodipicolinate is bound at residue 144-145; the sequence is GT.

Belongs to the DapB family.

The protein resides in the cytoplasm. It carries out the reaction (S)-2,3,4,5-tetrahydrodipicolinate + NAD(+) + H2O = (2S,4S)-4-hydroxy-2,3,4,5-tetrahydrodipicolinate + NADH + H(+). The catalysed reaction is (S)-2,3,4,5-tetrahydrodipicolinate + NADP(+) + H2O = (2S,4S)-4-hydroxy-2,3,4,5-tetrahydrodipicolinate + NADPH + H(+). The protein operates within amino-acid biosynthesis; L-lysine biosynthesis via DAP pathway; (S)-tetrahydrodipicolinate from L-aspartate: step 4/4. In terms of biological role, catalyzes the conversion of 4-hydroxy-tetrahydrodipicolinate (HTPA) to tetrahydrodipicolinate. In Corynebacterium glutamicum (strain R), this protein is 4-hydroxy-tetrahydrodipicolinate reductase.